Here is a 687-residue protein sequence, read N- to C-terminus: Polyphosphate kinase (687 aa).

N45 serves as a coordination point for ATP. R375 and R405 together coordinate Mg(2+). The Phosphohistidine intermediate role is filled by H435. The ATP site is built by Y472, R568, and H596.

Belongs to the polyphosphate kinase 1 (PPK1) family. It depends on Mg(2+) as a cofactor. In terms of processing, an intermediate of this reaction is the autophosphorylated ppk in which a phosphate is covalently linked to a histidine residue through a N-P bond.

The catalysed reaction is [phosphate](n) + ATP = [phosphate](n+1) + ADP. Functionally, catalyzes the reversible transfer of the terminal phosphate of ATP to form a long-chain polyphosphate (polyP). The protein is Polyphosphate kinase of Paraburkholderia phytofirmans (strain DSM 17436 / LMG 22146 / PsJN) (Burkholderia phytofirmans).